A 457-amino-acid polypeptide reads, in one-letter code: Argininosuccinate lyase (457 aa).

The protein belongs to the lyase 1 family. Argininosuccinate lyase subfamily.

It localises to the cytoplasm. It catalyses the reaction 2-(N(omega)-L-arginino)succinate = fumarate + L-arginine. The protein operates within amino-acid biosynthesis; L-arginine biosynthesis; L-arginine from L-ornithine and carbamoyl phosphate: step 3/3. In Escherichia coli O9:H4 (strain HS), this protein is Argininosuccinate lyase.